The sequence spans 1697 residues: MTGAPPYNPQSPTQQSRYPVYSPPAKSRPYYANNEQYQQHPPQTPPAFSSRSPHFSHAPSPLPGTLPPLNGAAPPSSHPSEPPSQYQAHSSAGNPQFALPRPYPGSVLSGNGASPYGHSTPSHAHPAGRPDSHPQTSPKKESESQFPMSTHGVMGYPSSVVREPRASSPPKDVKPTRAADPMSFASILSGPTEERAPPPRQSSAEATPTPLAPAATAQTSLSPPPVASAATSQKSKDRAPALTASLPRLEKKPTTEKRRRNPPETEQKTADSRTSNVANGVSEPSKTLAQPRGAGSRPVMSERETEALNKALADMAEADKSDVEAPGYDRFREEYRAKGKKRAFATEQAEILRRKRRRNDFLVKLSKSLEKQATAGMDRFRYANEASVVAEVQAKEIQDEKERKKDMQRKRRRENTVRMEMQKKKEAEAKAHEAQDSAEKAKFLREAERAQRKIKTTKRALEGITAPEEISEVTPLAPNLEGGTTSSFHIGRGSPSRRKSGRGGPVTRPKKSKEQKQAEKDAAEAAYAAMENDEPLPIAPKEDPRKESLKKEVKGGRSKEPTPTPLSAYETKGYNQIYEQIWRDIARKDIPKVYRIKALSLSTRQENLRKTAQLASKQSRKWQERTNKSMKDTQARAKRTMREMMSFWKRNEREERDLRRLAEKQEIESAKKAEAEREANRQRRKLNFLISQTELYSHFIGRKIKGAEGDAAGDTAVEATGETVQPGKGQDHTIDMPSSVADAGTKVTNFEDLDFDAEDETALRQAAMANAQNAVQEAQDRARAFNSGQNQMDALDEGELNFQNPTSLGDIEISQPNMLTAKLKEYQLKGLNWLVNLYEQGINGILADEMGLGKTIQSISVMAYLAEVHNIWGPFLVIAPASTLHNWQQEITKFVPDIKVLPYWGSAKDRKILRKFWDRKHITYTKESEFHVLVTSYQLVVLDAQYFQKVKWQYMILDEAQAIKSSQSSRWKNLLGFHCRNRLLLTGTPIQNNMQELWALLHFIMPTLFDSHDEFSEWFSKDIESHAQSNTKLNEDQLRRLHMILKPFMLRRVKKHVQQELGDKVEKDIFCDLTYRQRAYYTNLRNRVSIMDLIEKAAVGDEADSTTLMNLVMQFRKVCNHPDLFERAETKSPFSTAYFAETASFVREGNNVDVRYSTRNLIEYPMPRLLCGAGGRVDVAGAENPHAGFRGRYLNHLMNIFTPENMKQSIQDDGAFSFLRFVDTSLGEAYEQSHLGIFERAVRRRGQVNRLSRLNVAYDDDKELAGSALPHTLFNIVDRNDKHAVNEVAAEGIMRDLMTVSQSTYEREGLNIIEPCVSPAASAPPISVVSSSHIPSIETRDTLFNVSVRHALYSTPSRQVDEQIIEKKVDPTPYSLAPMLPKPISAKGRYTHIEVPSMRRFVTDSGKLAKLDELLRELKAGGHRVLLYFQMTRMIDLMEEYLTYRNYKYCRLDGSTKLEDRRDTVADFQQRPEIFVFLLSTRAGGLGINLTAADTVIFYDSDWNPTIDSQAMDRAHRLGQTRQVTVYRLITRGTIEERIRKRALQKEEVQRVVITGGAAGGVDFNTRNRESRTKDIAMWLADDEQAELIEQKEKEALDRGEVFGAGKGGKKAAQKRKKDITLDDMYHEGEGNFDDASAKPSGAATPVSTAENVGTPSSTPAPKRGRGRGSGKGTSKRAKTTKERLRLIDGDGGLGPS.

Disordered stretches follow at residues 1 to 324, 398 to 569, and 615 to 637; these read MTGA…SDVE, QDEK…LSAY, and ASKQSRKWQERTNKSMKDTQARA. 3 stretches are compositionally biased toward polar residues: residues 33 to 53, 85 to 94, and 108 to 122; these read NNEQYQQHPPQTPPAFSSRSP, QYQAHSSAGN, and LSGNGASPYGHSTPS. A compositionally biased stretch (basic and acidic residues) spans 128–143; that stretch reads GRPDSHPQTSPKKESE. A compositionally biased stretch (low complexity) spans 202 to 221; the sequence is SSAEATPTPLAPAATAQTSL. Residues 248 to 271 show a composition bias toward basic and acidic residues; the sequence is RLEKKPTTEKRRRNPPETEQKTAD. The segment covering 272–288 has biased composition (polar residues); it reads SRTSNVANGVSEPSKTL. Residues 383-466 are a coiled coil; sequence ANEASVVAEV…TKRALEGITA (84 aa). Composition is skewed to basic and acidic residues over residues 414 to 451, 512 to 523, 540 to 560, and 621 to 635; these read ENTVRMEMQKKKEAEAKAHEAQDSAEKAKFLREAERAQ, SKEQKQAEKDAA, PKEDPRKESLKKEVKGGRSKE, and KWQERTNKSMKDTQA. The DBINO domain maps to 581–706; the sequence is IWRDIARKDI…SHFIGRKIKG (126 aa). Residues 623–694 adopt a coiled-coil conformation; sequence QERTNKSMKD…KLNFLISQTE (72 aa). A Helicase ATP-binding domain is found at 835 to 1007; that stretch reads VNLYEQGING…WALLHFIMPT (173 aa). ATP is bound at residue 848–855; that stretch reads DEMGLGKT. The DEAQ box signature appears at 958–961; sequence DEAQ. The 161-residue stretch at 1410-1570 folds into the Helicase C-terminal domain; sequence KLDELLRELK…GVDFNTRNRE (161 aa). The tract at residues 1626 to 1697 is disordered; sequence YHEGEGNFDD…IDGDGGLGPS (72 aa). Over residues 1646 to 1658 the composition is skewed to polar residues; sequence PVSTAENVGTPSS. A compositionally biased stretch (basic residues) spans 1663–1679; sequence KRGRGRGSGKGTSKRAK. The span at 1680–1689 shows a compositional bias: basic and acidic residues; the sequence is TTKERLRLID.

This sequence belongs to the SNF2/RAD54 helicase family. In terms of assembly, component of the INO80 chromatin-remodeling complex.

It is found in the nucleus. The enzyme catalyses ATP + H2O = ADP + phosphate + H(+). Functionally, ATPase component of the INO80 complex which remodels chromatin by shifting nucleosomes and is involved in DNA repair. This chain is Chromatin-remodeling ATPase INO80 (ino80), found in Aspergillus niger (strain ATCC MYA-4892 / CBS 513.88 / FGSC A1513).